A 54-amino-acid chain; its full sequence is Zinc-containing ferredoxin A (54 aa).

The interval 1 to 21 (GIDPNYRTSRPEVGTHEGHKV) is disordered. Positions 1–36 (GIDPNYRTSRPEVGTHEGHKVYGPVENPKVLGIHGA) are N-terminal extension. Basic and acidic residues predominate over residues 9-20 (SRPEVGTHEGHK). Zn(2+) contacts are provided by histidine 16 and histidine 19. Position 29 is an N6-methyllysine (lysine 29). Histidine 34 serves as a coordination point for Zn(2+). The 4Fe-4S ferredoxin-type 1 domain occupies 35-54 (GAIVGVDFDLCIADGSCINA). [3Fe-4S] cluster-binding residues include cysteine 45 and cysteine 51.

It depends on [3Fe-4S] cluster as a cofactor. [4Fe-4S] cluster is required as a cofactor. The cofactor is Zn(2+).

Ferredoxins are iron-sulfur proteins that transfer electrons in a wide variety of metabolic reactions. In Sulfuracidifex metallicus (Sulfolobus metallicus), this protein is Zinc-containing ferredoxin A (zfx).